The following is a 67-amino-acid chain: Large ribosomal subunit protein bL35 (67 aa).

Belongs to the bacterial ribosomal protein bL35 family.

The protein is Large ribosomal subunit protein bL35 of Bartonella tribocorum (strain CIP 105476 / IBS 506).